The primary structure comprises 620 residues: Coenzyme F420-dependent sulfite reductase (620 aa).

The 4Fe-4S ferredoxin-type 1 domain occupies 6–35 (LNEIVDSGVCARCGTCTIVCPNGILTFDER). Residues C15, C18, C21, C25, C428, C434, C468, C472, C495, C498, C501, C505, C524, C527, C530, and C534 each contribute to the [4Fe-4S] cluster site. C472 lines the siroheme pocket. 2 consecutive 4Fe-4S ferredoxin-type domains span residues 486-515 (KYPK…IRGE) and 520-544 (NYNV…VKEE).

The protein belongs to the nitrite and sulfite reductase 4Fe-4S domain family. It depends on [4Fe-4S] cluster as a cofactor. Requires siroheme as cofactor.

It carries out the reaction 3 oxidized coenzyme F420-(gamma-L-Glu)(n) + hydrogen sulfide + 3 H2O + 2 H(+) = 3 reduced coenzyme F420-(gamma-L-Glu)(n) + sulfite. Its function is as follows. Catalyzes the reduction of sulfite to sulfide using reduced F420 as the electron source. Involved in sulfite detoxification and assimilation. Cannot use NADH or NADPH. The protein is Coenzyme F420-dependent sulfite reductase of Methanocaldococcus jannaschii (strain ATCC 43067 / DSM 2661 / JAL-1 / JCM 10045 / NBRC 100440) (Methanococcus jannaschii).